Here is a 79-residue protein sequence, read N- to C-terminus: MORN repeat-containing protein 2 (79 aa).

2 MORN repeats span residues 15–37 (YEGHFKDNMFHGLGTYTFPNGAK) and 38–60 (YTGNFNENRVEGEGQYTDIQGLE).

This is MORN repeat-containing protein 2 (MORN2) from Bos taurus (Bovine).